The chain runs to 1137 residues: DENN domain-containing protein 2B (1137 aa).

Residues 1–12 are compositionally biased toward polar residues; it reads MTMTANKNSSIT. Residues 1–99 form a disordered region; it reads MTMTANKNSS…PTCPFKTASF (99 aa). Ser30 and Ser32 each carry phosphoserine. Pro residues predominate over residues 32-43; it reads SPPPVLSPPRSP. Residues 49–64 are compositionally biased toward polar residues; sequence DSETSACRYPSHSSSR. The span at 73 to 92 shows a compositional bias: pro residues; sequence PAPSPQNPQDPSPDTSPPTC. Thr231 is modified (phosphothreonine). A Phosphoserine modification is found at Ser233. The disordered stretch occupies residues 293–573; the sequence is KEQPGRGLPQ…HRLPRLPKRH (281 aa). The segment covering 324–348 has biased composition (low complexity); sequence EEPAGGASVSAGSRAVGVAGVAGEA. The residue at position 364 (Thr364) is a Phosphothreonine. A Phosphoserine modification is found at Ser368. A compositionally biased stretch (low complexity) spans 368–380; that stretch reads SPSSQRLPSKSSL. Residues 392–402 show a composition bias toward basic and acidic residues; that stretch reads RTFEYEADKNP. The interval 401-447 is interaction with ABL1; that stretch reads NPKSKPSNGLPPSPTPAAPPPLPSTPAPPVTRRPKKDMRGHRKSQSR. The segment covering 409–431 has biased composition (pro residues); the sequence is GLPPSPTPAAPPPLPSTPAPPVT. Residues 432 to 446 are compositionally biased toward basic residues; that stretch reads RRPKKDMRGHRKSQS. Residues 456–481 are compositionally biased toward polar residues; the sequence is SSLQSLYPSSPTENGTENQPKFGSKS. Thr482 carries the post-translational modification Phosphothreonine. The span at 495-508 shows a compositional bias: basic and acidic residues; the sequence is LPKENPYEDVDLKS. Polar residues-rich tracts occupy residues 514-524 and 539-558; these read KSQQLSENSLD and SPPT…SGNW. Phosphoserine is present on Ser545. Basic residues predominate over residues 562–573; sequence KSHRLPRLPKRH. Residues Ser574 and Ser622 each carry the phosphoserine modification. Positions 641–661 are disordered; the sequence is IETASLRDENSESESDSDDRF. A uDENN domain is found at 698–846; it reads EYFVVVSLKK…PFPAPGKTIK (149 aa). The cDENN domain occupies 868–1001; sequence RLEHVDFECL…LQAALEQALE (134 aa). Residues 1003 to 1096 form the dDENN domain; sequence KNELISQDSD…QDRELRKCRA (94 aa).

As to quaternary structure, interacts with ITSN1 and GRB2. Isoform 1 interacts with the SH3 domain of ABL1. Phosphorylated. Phosphorylation decreases ITSN1 binding. In terms of tissue distribution, widely expressed with the exception of peripheral blood lymphocytes. Isoform 1 is expressed in several epithelial and fibroblast (including tumorigenic) but absent in lymphoid cell lines (at protein level). Isoform 3 is expressed in primary cell or weakly tumorigenic but not in tumorigenic cell lines (at protein level).

The protein resides in the cytoplasm. The protein localises to the cell cortex. It localises to the cell membrane. Its subcellular location is the recycling endosome. May be involved in cytoskeletal organization and tumorogenicity. Seems to be involved in a signaling transduction pathway leading to activation of MAPK1/ERK2. Plays a role in EGFR trafficking from recycling endosomes back to the cell membrane. Its function is as follows. Guanine nucleotide exchange factor (GEF) which may activate RAB9A and RAB9B. Promotes the exchange of GDP to GTP, converting inactive GDP-bound Rab proteins into their active GTP-bound form. In terms of biological role, may block ERK2 activation stimulated by ABL1. May alter cell morphology and cell growth. The chain is DENN domain-containing protein 2B from Homo sapiens (Human).